We begin with the raw amino-acid sequence, 246 residues long: Pyridoxine 5'-phosphate synthase (246 aa).

N12 contributes to the 3-amino-2-oxopropyl phosphate binding site. D14–H15 serves as a coordination point for 1-deoxy-D-xylulose 5-phosphate. Residue R23 coordinates 3-amino-2-oxopropyl phosphate. The active-site Proton acceptor is the H48. Residues R50 and H55 each coordinate 1-deoxy-D-xylulose 5-phosphate. Residue E75 is the Proton acceptor of the active site. A 1-deoxy-D-xylulose 5-phosphate-binding site is contributed by T105. H196 (proton donor) is an active-site residue. 3-amino-2-oxopropyl phosphate is bound by residues G197 and G218–H219.

Belongs to the PNP synthase family. Homooctamer; tetramer of dimers.

It localises to the cytoplasm. The catalysed reaction is 3-amino-2-oxopropyl phosphate + 1-deoxy-D-xylulose 5-phosphate = pyridoxine 5'-phosphate + phosphate + 2 H2O + H(+). It functions in the pathway cofactor biosynthesis; pyridoxine 5'-phosphate biosynthesis; pyridoxine 5'-phosphate from D-erythrose 4-phosphate: step 5/5. Catalyzes the complicated ring closure reaction between the two acyclic compounds 1-deoxy-D-xylulose-5-phosphate (DXP) and 3-amino-2-oxopropyl phosphate (1-amino-acetone-3-phosphate or AAP) to form pyridoxine 5'-phosphate (PNP) and inorganic phosphate. The sequence is that of Pyridoxine 5'-phosphate synthase from Pseudomonas putida (strain GB-1).